The primary structure comprises 502 residues: MKESQVYLELNRSRQHDFLYPLIFREYIYALAYDHGLNKSMILLENEDYGNKFSSLIVKRLIIRMDQQNHLIISANDSNQNPFFGHNNNLYSQMISAGFAVIVEITFSLRLVSYSQGKEVAKSHNLQSIHSIFPFLEDKFSHLNYVLDVLIPHPIHLEILVQALRYWVKDASSLHLLRFSLYEYCNLKSFFTPKKSISIFNPRLFLFLYNSHVCEYESIFLFLRNQSSHLRSTSSGVFLERIYFYGKIEYLVEVFCNDFQNNLWLFKDPFIHFIRYQGKAILASKDTSLLMNKWKYYFVDLWQYYFYVWSQSGRVRINQLSKYSLDFLGYLSSVRLNPSVVRSQMLESSFIIDNAMKKLDTRIPIISLIGSLSKAKFCNTLGHPISKPTWXDSSDSDIIDRFVRICRNLSHYHSGSSKKKSLYRIKYILRLSCVKTLARKHKSTVRAFLKRLGSEFLEEFFMEEEQVFSLMFPRVFSTSRKLYRGRIWYLDIICINVLVNNE.

Belongs to the intron maturase 2 family. MatK subfamily.

It localises to the plastid. The protein resides in the chloroplast. Its function is as follows. Usually encoded in the trnK tRNA gene intron. Probably assists in splicing its own and other chloroplast group II introns. The sequence is that of Maturase K from Theobroma cacao (Cacao).